Reading from the N-terminus, the 282-residue chain is Shikimate dehydrogenase (NADP(+)) (282 aa).

Residues 15-17 (SKS) and threonine 62 contribute to the shikimate site. The active-site Proton acceptor is the lysine 66. Asparagine 87 and aspartate 103 together coordinate shikimate. NADP(+) contacts are provided by residues 127-131 (GAGGA), 151-156 (NRTHTK), and methionine 220. Tyrosine 222 contributes to the shikimate binding site. Position 244 (glycine 244) interacts with NADP(+).

Belongs to the shikimate dehydrogenase family. As to quaternary structure, homodimer.

It catalyses the reaction shikimate + NADP(+) = 3-dehydroshikimate + NADPH + H(+). It functions in the pathway metabolic intermediate biosynthesis; chorismate biosynthesis; chorismate from D-erythrose 4-phosphate and phosphoenolpyruvate: step 4/7. In terms of biological role, involved in the biosynthesis of the chorismate, which leads to the biosynthesis of aromatic amino acids. Catalyzes the reversible NADPH linked reduction of 3-dehydroshikimate (DHSA) to yield shikimate (SA). This chain is Shikimate dehydrogenase (NADP(+)), found in Shewanella putrefaciens (strain CN-32 / ATCC BAA-453).